The primary structure comprises 321 residues: Leucine-rich repeat-containing protein 46 (321 aa).

LRR repeat units lie at residues 45-66 (ELQT…EGLQ), 67-88 (NLHS…ACIP), 89-110 (SLRF…LDLP), and 111-132 (CLQF…EFPQ). In terms of domain architecture, LRRCT spans 142–184 (NSCTNQDGYRELVTEALPLLLDLDGQPVVERWISDEEDEASSD). A phosphoserine mark is found at S175 and S182. Residues 201 to 221 (LKELEQELSRHREHRQQTALT) adopt a coiled-coil conformation. Positions 235-321 (DLPLLPGVPM…TKTTAKRSKK (87 aa)) are disordered.

The protein localises to the cell projection. The protein resides in the cilium. It localises to the flagellum. Its function is as follows. Required for normal spermatogenesis and male fertility. Plays an important role in sperm flagellum biogenesis. This is Leucine-rich repeat-containing protein 46 (LRRC46) from Homo sapiens (Human).